Reading from the N-terminus, the 160-residue chain is uncharacterized protein (160 aa).

The chain crosses the membrane as a helical span at residues 1–21; it reads MSIQTLIIISIVIFILWLTFT.

The protein belongs to the IIV-6 203L/325L family.

Its subcellular location is the membrane. This is an uncharacterized protein from Invertebrate iridescent virus 6 (IIV-6).